The following is a 188-amino-acid chain: Elongation factor P (188 aa).

Position 34 is an N6-(3,6-diaminohexanoyl)-5-hydroxylysine (K34).

It belongs to the elongation factor P family. Post-translationally, may be beta-lysylated on the epsilon-amino group of Lys-34 by the combined action of EpmA and EpmB, and then hydroxylated on the C5 position of the same residue by EpmC (if this protein is present). Lysylation is critical for the stimulatory effect of EF-P on peptide-bond formation. The lysylation moiety may extend toward the peptidyltransferase center and stabilize the terminal 3-CCA end of the tRNA. Hydroxylation of the C5 position on Lys-34 may allow additional potential stabilizing hydrogen-bond interactions with the P-tRNA.

Its subcellular location is the cytoplasm. The protein operates within protein biosynthesis; polypeptide chain elongation. Functionally, involved in peptide bond synthesis. Alleviates ribosome stalling that occurs when 3 or more consecutive Pro residues or the sequence PPG is present in a protein, possibly by augmenting the peptidyl transferase activity of the ribosome. Modification of Lys-34 is required for alleviation. In Yersinia pseudotuberculosis serotype O:1b (strain IP 31758), this protein is Elongation factor P.